Reading from the N-terminus, the 393-residue chain is Probable xylan O-acetyltransferase 11 (393 aa).

The Cytoplasmic portion of the chain corresponds to 1–9 (MHQPAIMQR). The chain crosses the membrane as a helical; Signal-anchor for type II membrane protein span at residues 10 to 26 (ALAVVALLAAAAAIAAA). Residues 27-393 (QGESPELLPF…LFFPARDEAI (367 aa)) lie on the Lumenal side of the membrane. Intrachain disulfides connect Cys-45/Cys-96, Cys-67/Cys-132, Cys-76/Cys-368, and Cys-283/Cys-364. N-linked (GlcNAc...) asparagine glycosylation is present at Asn-102. Residues 119–121 (GDS) carry the GDS motif motif. The active-site Nucleophile is Ser-121. An N-linked (GlcNAc...) asparagine glycan is attached at Asn-325. Asp-363 (proton donor) is an active-site residue. A DXXH motif motif is present at residues 363 to 366 (DCTH). His-366 functions as the Proton acceptor in the catalytic mechanism.

The protein belongs to the PC-esterase family. TBL subfamily. As to expression, expressed in roots, leaves and stems.

It is found in the golgi apparatus membrane. Functionally, probable xylan acetyltransferase required for 2-O- and 3-O-monoacetylation of xylosyl residues in xylan. Possesses extremely low activity in vitro. This Oryza sativa subsp. japonica (Rice) protein is Probable xylan O-acetyltransferase 11.